A 193-amino-acid polypeptide reads, in one-letter code: Protein B4 (193 aa).

A run of 3 helical transmembrane segments spans residues 15-35, 36-56, and 160-180; these read FFVC…CVFF, CVYF…VFFV, and LSLC…IVFS.

The protein resides in the host membrane. This is Protein B4 (B4) from Homo sapiens (Human).